Reading from the N-terminus, the 167-residue chain is NADH-quinone oxidoreductase subunit I 1 (167 aa).

4Fe-4S ferredoxin-type domains follow at residues 52–82 (LQRDVNGMEKCVACFLCAAACPSNCIYIEAA) and 98–127 (KVYNIDYNRCIFCGYCVEACPTDAITHGHG). Residues Cys-62, Cys-65, Cys-68, Cys-72, Cys-107, Cys-110, Cys-113, and Cys-117 each contribute to the [4Fe-4S] cluster site. Residues 148–167 (PVPPGAKPPSMADEVPAGAH) form a disordered region.

This sequence belongs to the complex I 23 kDa subunit family. In terms of assembly, NDH-1 is composed of 14 different subunits. Subunits NuoA, H, J, K, L, M, N constitute the membrane sector of the complex. Requires [4Fe-4S] cluster as cofactor.

It localises to the cell inner membrane. The catalysed reaction is a quinone + NADH + 5 H(+)(in) = a quinol + NAD(+) + 4 H(+)(out). In terms of biological role, NDH-1 shuttles electrons from NADH, via FMN and iron-sulfur (Fe-S) centers, to quinones in the respiratory chain. The immediate electron acceptor for the enzyme in this species is believed to be ubiquinone. Couples the redox reaction to proton translocation (for every two electrons transferred, four hydrogen ions are translocated across the cytoplasmic membrane), and thus conserves the redox energy in a proton gradient. The chain is NADH-quinone oxidoreductase subunit I 1 from Solibacter usitatus (strain Ellin6076).